Reading from the N-terminus, the 357-residue chain is Selenide, water dikinase (357 aa).

Cysteine 25 is a catalytic residue. ATP contacts are provided by residues lysine 28 and 57 to 59; that span reads TAD. Aspartate 60 serves as a coordination point for Mg(2+). ATP-binding positions include aspartate 77, aspartate 100, and 148 to 150; that span reads GHS. Residue aspartate 100 participates in Mg(2+) binding. Residue aspartate 236 coordinates Mg(2+).

The protein belongs to the selenophosphate synthase 1 family. Class I subfamily. Homodimer. Mg(2+) is required as a cofactor.

The enzyme catalyses hydrogenselenide + ATP + H2O = selenophosphate + AMP + phosphate + 2 H(+). In terms of biological role, synthesizes selenophosphate from selenide and ATP. The sequence is that of Selenide, water dikinase from Pseudomonas straminea.